A 195-amino-acid polypeptide reads, in one-letter code: Keratin-associated protein 4-11 (195 aa).

Tandem repeats lie at residues 5 to 9 (CCGSV), 24 to 28 (CCRPS), 29 to 33 (CCETT), 34 to 38 (CCRTT), 44 to 48 (CCVSS), 49 to 53 (CCRPQ), 54 to 58 (CCQSV), 59 to 63 (CCQPT), 64 to 68 (CCRPR), 69 to 73 (CCISS), 74 to 78 (CCRPS), 79 to 83 (CCVSS), 84 to 88 (CCKPQ), 89 to 93 (CCQSM), 94 to 98 (CCQPT), 99 to 103 (CCRPR), 104 to 108 (CCISS), 109 to 113 (CCRPS), 114 to 118 (CCVSS), 119 to 123 (CCRPQ), 124 to 128 (CCQSV), 129 to 133 (CCQPT), 134 to 138 (CCHPS), 144 to 148 (CCRPS), 149 to 153 (CCESS), 154 to 158 (CCRPC), and 159 to 163 (CCLRP). Residues 5-163 (CCGSVCSHQG…CCRPCCCLRP (159 aa)) form a 27 X 5 AA repeats of C-C-[GIKRQVHEL]-[SPTR]-[STVQRMC] region.

This sequence belongs to the KRTAP type 4 family. As to quaternary structure, interacts with hair keratins. As to expression, expressed in the hair follicles.

Functionally, in the hair cortex, hair keratin intermediate filaments are embedded in an interfilamentous matrix, consisting of hair keratin-associated proteins (KRTAP), which are essential for the formation of a rigid and resistant hair shaft through their extensive disulfide bond cross-linking with abundant cysteine residues of hair keratins. The matrix proteins include the high-sulfur and high-glycine-tyrosine keratins. This chain is Keratin-associated protein 4-11 (KRTAP4-11), found in Homo sapiens (Human).